The chain runs to 207 residues: Guanylate kinase (207 aa).

The 180-residue stretch at 6-185 (GLLIVLSGPS…AKNRIQCIVE (180 aa)) folds into the Guanylate kinase-like domain. 13–20 (GPSGVGKG) provides a ligand contact to ATP.

This sequence belongs to the guanylate kinase family.

The protein localises to the cytoplasm. It catalyses the reaction GMP + ATP = GDP + ADP. In terms of biological role, essential for recycling GMP and indirectly, cGMP. This is Guanylate kinase from Staphylococcus aureus (strain USA300).